The chain runs to 192 residues: uncharacterized protein (192 aa).

The 132-residue stretch at 29–160 (HRQAAVLIPI…PLDIYRRGDS (132 aa)) folds into the Nudix hydrolase domain. A Nudix box motif is present at residues 67–89 (GAVDDTDASVIAAALREAEEEVA). Residues Glu83 and Glu87 each coordinate Mg(2+).

It belongs to the Nudix hydrolase family. PCD1 subfamily. Requires Mn(2+) as cofactor. It depends on Mg(2+) as a cofactor.

Functionally, probably mediates the hydrolysis of some nucleoside diphosphate derivatives. This is an uncharacterized protein from Shigella boydii serotype 4 (strain Sb227).